We begin with the raw amino-acid sequence, 78 residues long: Large ribosomal subunit protein bL28 (78 aa).

The interval 1 to 23 is disordered; sequence MSRICQITGKKPLSGNKRSHSMN.

This sequence belongs to the bacterial ribosomal protein bL28 family.

The sequence is that of Large ribosomal subunit protein bL28 from Wigglesworthia glossinidia brevipalpis.